We begin with the raw amino-acid sequence, 357 residues long: Glucose-6-phosphatase catalytic subunit 1 (357 aa).

The Lumenal portion of the chain corresponds to 1-28 (MEKGMNVLHDFGIQSTHYLQVNYQNSQD). The chain crosses the membrane as a helical span at residues 29 to 49 (WFILVSVIADLRNAFYVLFPI). Residues 50–60 (WFHLREAVGIK) lie on the Cytoplasmic side of the membrane. Residues 61 to 81 (LLWVAVIGDWLNLVFKWILFG) traverse the membrane as a helical segment. Residues 82 to 117 (QRPYWWVLDTDYYSNTSAPLIKQFPVTCETGPGSPS) are Lumenal-facing. R83 contributes to the substrate binding site. The N-linked (GlcNAc...) asparagine glycan is linked to N96. The chain crosses the membrane as a helical span at residues 118 to 138 (GHAMGTAGVYYVMVTSTLSIF). Catalysis depends on H119, which acts as the Proton donor. At 139–147 (RGKKKPTYR) the chain is on the cytoplasmic side. The helical transmembrane segment at 148 to 168 (FRCLNVMLWLGFWVVQLNVCL) threads the bilayer. Over 169–170 (SR) the chain is Lumenal. R170 provides a ligand contact to substrate. The chain crosses the membrane as a helical span at residues 171–191 (IYLAAHFPHQVVAGVLSGIAV). H176 serves as the catalytic Nucleophile. Over 192–209 (AETFRHIQSIYNASLKKY) the chain is Cytoplasmic. Residues 210-230 (FLITCFLFSFAIGFYLLLKWL) traverse the membrane as a helical segment. Residues 231-254 (GVDLLWTLEKAKRRCERPEWVHID) lie on the Lumenal side of the membrane. The helical transmembrane segment at 255-275 (TTPFASLLKNLGTLFGLGLAL) threads the bilayer. The Cytoplasmic portion of the chain corresponds to 276 to 291 (NSSMYRESCKGKLSKW). The helical transmembrane segment at 292–312 (FPFRLSCIVASLVLLHLFDSL) threads the bilayer. Residues 313-320 (KPPSQIEL) lie on the Lumenal side of the membrane. A helical transmembrane segment spans residues 321–341 (IFYVLSFCKSAAVPLASVSLI). Topologically, residues 342-357 (PYCLAWVLGQPNKKTV) are cytoplasmic. Positions 354 to 357 (KKTV) match the Prevents secretion from ER motif.

The protein belongs to the glucose-6-phosphatase family.

Its subcellular location is the endoplasmic reticulum membrane. It carries out the reaction D-glucose 6-phosphate + H2O = D-glucose + phosphate. It functions in the pathway carbohydrate biosynthesis; gluconeogenesis. Functionally, hydrolyzes glucose-6-phosphate to glucose in the endoplasmic reticulum. Forms with the glucose-6-phosphate transporter (SLC37A4/G6PT) the complex responsible for glucose production in the terminal step of glycogenolysis and gluconeogenesis. Hence, it is the key enzyme in homeostatic regulation of blood glucose levels. This Bos taurus (Bovine) protein is Glucose-6-phosphatase catalytic subunit 1 (G6PC1).